The sequence spans 126 residues: Ribonuclease VapC23 (126 aa).

Positions isoleucine 2 to histidine 118 constitute a PINc domain. Mg(2+)-binding residues include aspartate 5 and aspartate 98.

This sequence belongs to the PINc/VapC protein family. The cofactor is Mg(2+).

Functionally, toxic component of a type II toxin-antitoxin (TA) system. An RNase. The cognate antitoxin is VapB23. This Mycobacterium tuberculosis (strain CDC 1551 / Oshkosh) protein is Ribonuclease VapC23.